A 122-amino-acid polypeptide reads, in one-letter code: Antitoxin protein TsiV3 (122 aa).

Positions 1–24 (MNNLLSAYVTMLLILLSISGGAIA) are cleaved as a signal peptide. Intrachain disulfides connect C28–C41 and C82–C100.

Homodimer; dimerization is critical for inhibitory activity. Forms a heterotetramer with VgrG3 composed of one TsiV3 homodimer and two VgrG3 molecules.

Its function is as follows. Immunity protein that plays a role in preventing early activation of toxin VgrG3. The polypeptide is Antitoxin protein TsiV3 (Vibrio cholerae serotype O1 (strain ATCC 39315 / El Tor Inaba N16961)).